We begin with the raw amino-acid sequence, 454 residues long: F-box/WD repeat-containing protein 2 (454 aa).

The F-box domain occupies 54 to 101; it reads RDFLKLLPLELSFYLLKWLDPQTLLTCCLVSKQWNKVISACTEVWQTA. WD repeat units lie at residues 139-175, 179-213, 217-255, 259-306, 313-352, 364-403, and 410-452; these read FETS…LWDV, QCVY…CWEW, ARTQ…VWAL, TCLN…IWPI, KCLK…QWDF, PEIA…RWPL, and KRGS…LWKE. The residue at position 298 (Lys-298) is an N6-acetyllysine.

As to quaternary structure, directly interacts with SKP1 and CUL1.

Substrate-recognition component of the SCF (SKP1-CUL1-F-box protein)-type E3 ubiquitin ligase complex. This chain is F-box/WD repeat-containing protein 2 (FBXW2), found in Homo sapiens (Human).